The chain runs to 89 residues: Small ribosomal subunit protein uS15 (89 aa).

Positions 1–11 are enriched in basic and acidic residues; the sequence is MSITAERKAEV. Residues 1–24 are disordered; sequence MSITAERKAEVIKTSATKAGDTGS.

This sequence belongs to the universal ribosomal protein uS15 family. Part of the 30S ribosomal subunit. Forms a bridge to the 50S subunit in the 70S ribosome, contacting the 23S rRNA.

One of the primary rRNA binding proteins, it binds directly to 16S rRNA where it helps nucleate assembly of the platform of the 30S subunit by binding and bridging several RNA helices of the 16S rRNA. Its function is as follows. Forms an intersubunit bridge (bridge B4) with the 23S rRNA of the 50S subunit in the ribosome. The protein is Small ribosomal subunit protein uS15 of Rhodopseudomonas palustris (strain TIE-1).